A 436-amino-acid polypeptide reads, in one-letter code: Chromosomal replication initiator protein DnaA (436 aa).

A domain I, interacts with DnaA modulators region spans residues 1 to 69 (MLADEVLELL…AHLFEVKTGT (69 aa)). Residues 69-99 (TKPNVEITTQTKLKSSKQNQVNIKQIKAQST) are domain II. The tract at residues 100-314 (LLNPAYTFEN…SAIINLNAYA (215 aa)) is domain III, AAA+ region. ATP contacts are provided by glycine 144, glycine 146, lysine 147, and threonine 148. A domain IV, binds dsDNA region spans residues 315–436 (NLMRQEITLD…ELKNKILTKG (122 aa)).

The protein belongs to the DnaA family. As to quaternary structure, oligomerizes as a right-handed, spiral filament on DNA at oriC.

The protein resides in the cytoplasm. Its function is as follows. Plays an essential role in the initiation and regulation of chromosomal replication. ATP-DnaA binds to the origin of replication (oriC) to initiate formation of the DNA replication initiation complex once per cell cycle. Binds the DnaA box (a 9 base pair repeat at the origin) and separates the double-stranded (ds)DNA. Forms a right-handed helical filament on oriC DNA; dsDNA binds to the exterior of the filament while single-stranded (ss)DNA is stabiized in the filament's interior. The ATP-DnaA-oriC complex binds and stabilizes one strand of the AT-rich DNA unwinding element (DUE), permitting loading of DNA polymerase. After initiation quickly degrades to an ADP-DnaA complex that is not apt for DNA replication. Binds acidic phospholipids. This chain is Chromosomal replication initiator protein DnaA, found in Campylobacter curvus (strain 525.92).